The sequence spans 86 residues: Large ribosomal subunit protein bL31B (86 aa).

It belongs to the bacterial ribosomal protein bL31 family. Type B subfamily. Part of the 50S ribosomal subunit.

The polypeptide is Large ribosomal subunit protein bL31B (Burkholderia cenocepacia (strain ATCC BAA-245 / DSM 16553 / LMG 16656 / NCTC 13227 / J2315 / CF5610) (Burkholderia cepacia (strain J2315))).